The primary structure comprises 132 residues: uncharacterized protein (132 aa).

The first 25 residues, 1–25, serve as a signal peptide directing secretion; sequence MRFTKVVGFLSVLGLAAVFPLTAQA.

This is an uncharacterized protein from Bacillus subtilis (strain 168).